A 513-amino-acid chain; its full sequence is ATP synthase subunit alpha (513 aa).

Residue 169–176 (GDRQIGKT) participates in ATP binding.

It belongs to the ATPase alpha/beta chains family. F-type ATPases have 2 components, CF(1) - the catalytic core - and CF(0) - the membrane proton channel. CF(1) has five subunits: alpha(3), beta(3), gamma(1), delta(1), epsilon(1). CF(0) has three main subunits: a(1), b(2) and c(9-12). The alpha and beta chains form an alternating ring which encloses part of the gamma chain. CF(1) is attached to CF(0) by a central stalk formed by the gamma and epsilon chains, while a peripheral stalk is formed by the delta and b chains.

The protein resides in the cell inner membrane. The enzyme catalyses ATP + H2O + 4 H(+)(in) = ADP + phosphate + 5 H(+)(out). In terms of biological role, produces ATP from ADP in the presence of a proton gradient across the membrane. The alpha chain is a regulatory subunit. In Francisella tularensis subsp. tularensis (strain WY96-3418), this protein is ATP synthase subunit alpha.